The following is a 319-amino-acid chain: Large ribosomal subunit protein uL29m (319 aa).

Positions 1–55 (MWKRSFHSQGGPLRARTKFTKPKPKQPVLPKDKIRPPTQLTHHSNNLRITEPIPP) are disordered. Positions 15–24 (ARTKFTKPKP) are enriched in basic residues. The segment covering 38-48 (TQLTHHSNNLR) has biased composition (polar residues).

This sequence belongs to the universal ribosomal protein uL29 family. In terms of assembly, component of the mitochondrial large ribosomal subunit. Mature mitochondrial ribosomes consist of a small (37S) and a large (54S) subunit. The 37S subunit contains at least 33 different proteins and 1 molecule of RNA (15S). The 54S subunit contains at least 45 different proteins and 1 molecule of RNA (21S).

The protein resides in the mitochondrion. The polypeptide is Large ribosomal subunit protein uL29m (MRPL4) (Saccharomyces cerevisiae (strain YJM789) (Baker's yeast)).